A 693-amino-acid chain; its full sequence is Bacterial dynamin-like protein (693 aa).

At 1–521 (MVNQVATDRF…DNSPGWAKWA (521 aa)) the chain is on the cytoplasmic side. A Dynamin-type G domain is found at 66 to 313 (QQGVFRLLVL…QADLDGTGFP (248 aa)). The tract at residues 76-83 (GDMKRGKS) is G1 motif. 79-84 (KRGKST) is a binding site for GTP. Residues 102-103 (CT) form a G2 motif region. The tract at residues 180–183 (DSPG) is G3 motif. 235–241 (FLVNAWD) is a GTP binding site. Positions 238-241 (NAWD) are G4 motif. Position 268 (Asn268) is a region of interest, G5 motif. Position 292–293 (292–293 (SI)) interacts with GTP. The middle domain stretch occupies residues 311 to 571 (GFPKFMDSLN…TAVTGILLGP (261 aa)). Residues 347 to 378 (REAVARRIPLLEQDVNELKKRIDSVEPEFNKL) adopt a coiled-coil conformation. Residues 522 to 574 (MGLLSLSKGNLAGFALAGAGFDWKNILLNYFTVIGIGGIITAVTGILLGPIGF) lie within the membrane without spanning it. The tract at residues 572 to 606 (IGFALLGLGVGFLQADQARRELVKTAKKELVKHLP) is paddle domain. Residues 575 to 693 (ALLGLGVGFL…AYSNLLAYYS (119 aa)) are Cytoplasmic-facing. Positions 607 to 693 (QVAHEQSQVV…AYSNLLAYYS (87 aa)) are GED. Positions 661–688 (ESEFNRLKNLQEDVIAQLQKIEAAYSNL) form a coiled coil.

Belongs to the TRAFAC class dynamin-like GTPase superfamily. Dynamin/Fzo/YdjA family. Mitofusin subfamily. Homodimer. Self-assembles in the presence of GMP-PNP and liposomes, and probably also in the presence of GTP.

The protein resides in the cell inner membrane. The enzyme catalyses GTP + H2O = GDP + phosphate + H(+). In terms of biological role, dynamin-related GTPase probably involved in membrane remodeling. Lipid and nucleotide-binding are thought to induce a large intramolecular rearrangement, leading to assembly on lipid bilayers and possible membrane curving. In the presence of the non-hydrolyzable GTP analog GMP-PNP self-assembles on a lipid bilayer; this does not stimulate subsequent GTPase activity. Does not bind lipids in the presence of GDP; perhaps GTP hydrolysis disrupts membrane-binding. The sequence is that of Bacterial dynamin-like protein from Nostoc punctiforme (strain ATCC 29133 / PCC 73102).